The sequence spans 272 residues: Cell wall synthesis protein Wag31 (272 aa).

2 disordered regions span residues 1–22 (MPLTPADVHNVAFSKPPIGKRG) and 62–109 (AARS…SEDT). Residues 30-67 (AFLDLVENELTRLIEENADLRQRVAELDQELAAARSGA) adopt a coiled-coil conformation. Composition is skewed to low complexity over residues 62-76 (AARSGAGASSQATSS) and 94-105 (VYEAPAQPAAPQ). T74 bears the Phosphothreonine mark. Residues 139–206 (LSDARAQAEA…AERKHSEIMG (68 aa)) are a coiled coil. Residues 243–272 (ELGQRGSAAPVDSSANSDASGFGQFNRGNN) are disordered.

The protein belongs to the DivIVA family. As to quaternary structure, forms homooligomers. Interacts with PbpB and CwsA. Phosphorylated by PknA.

The protein localises to the cytoplasm. Functionally, important for maintaining cell shape and cell wall integrity by localizing peptidoglycan synthesis to the cell poles. Protects PbpB (PBP3, FtsI) from oxidative stress-induced cleavage. The protein is Cell wall synthesis protein Wag31 (wag31) of Mycolicibacterium smegmatis (strain ATCC 700084 / mc(2)155) (Mycobacterium smegmatis).